The following is a 455-amino-acid chain: Mycosin-4 (455 aa).

The first 25 residues, 1-25 (MTTSRTLRLLVVSALATLSGLGTPV), serve as a signal peptide directing secretion. Positions 74–384 (SAQLADLDQV…NGTVDALAAV (311 aa)) constitute a Peptidase S8 domain. Residues Asp98, His129, and Ser329 each act as charge relay system in the active site. The segment at 389–417 (IPQAGTATSDPAPVAVPVPRRSTPGPSDR) is disordered. The segment covering 394-412 (TATSDPAPVAVPVPRRSTP) has biased composition (low complexity). Residues 432 to 452 (LALMATLATASRRLRPGRNGI) traverse the membrane as a helical segment.

The protein belongs to the peptidase S8 family.

Its subcellular location is the cell membrane. This Mycobacterium tuberculosis (strain ATCC 25618 / H37Rv) protein is Mycosin-4.